A 312-amino-acid polypeptide reads, in one-letter code: Ribosomal RNA small subunit methyltransferase H (312 aa).

Residues 35–37, aspartate 55, phenylalanine 79, aspartate 101, and glutamine 108 each bind S-adenosyl-L-methionine; that span reads GGH. Residues 286-306 are disordered; the sequence is LKPSEHEVNENSRSRSSVLRV. A compositionally biased stretch (basic and acidic residues) spans 287 to 298; it reads KPSEHEVNENSR.

It belongs to the methyltransferase superfamily. RsmH family.

The protein resides in the cytoplasm. The catalysed reaction is cytidine(1402) in 16S rRNA + S-adenosyl-L-methionine = N(4)-methylcytidine(1402) in 16S rRNA + S-adenosyl-L-homocysteine + H(+). In terms of biological role, specifically methylates the N4 position of cytidine in position 1402 (C1402) of 16S rRNA. The sequence is that of Ribosomal RNA small subunit methyltransferase H from Aeromonas hydrophila subsp. hydrophila (strain ATCC 7966 / DSM 30187 / BCRC 13018 / CCUG 14551 / JCM 1027 / KCTC 2358 / NCIMB 9240 / NCTC 8049).